The following is a 179-amino-acid chain: Large ribosomal subunit protein uL5 (179 aa).

Belongs to the universal ribosomal protein uL5 family. In terms of assembly, part of the 50S ribosomal subunit; part of the 5S rRNA/L5/L18/L25 subcomplex. Contacts the 5S rRNA and the P site tRNA. Forms a bridge to the 30S subunit in the 70S ribosome.

This is one of the proteins that bind and probably mediate the attachment of the 5S RNA into the large ribosomal subunit, where it forms part of the central protuberance. In the 70S ribosome it contacts protein S13 of the 30S subunit (bridge B1b), connecting the 2 subunits; this bridge is implicated in subunit movement. Contacts the P site tRNA; the 5S rRNA and some of its associated proteins might help stabilize positioning of ribosome-bound tRNAs. The sequence is that of Large ribosomal subunit protein uL5 from Staphylococcus saprophyticus subsp. saprophyticus (strain ATCC 15305 / DSM 20229 / NCIMB 8711 / NCTC 7292 / S-41).